A 189-amino-acid polypeptide reads, in one-letter code: Thermostable direct hemolysin 1 (189 aa).

The N-terminal stretch at 1-24 is a signal peptide; the sequence is MKHQYFAKKSFLFISMLAAFKTSA. C175 and C185 are joined by a disulfide.

It belongs to the TDH hemolysin family. In terms of assembly, homodimer.

Bacterial hemolysins are exotoxins that attack blood cell membranes and cause cell rupture by mechanisms not clearly defined. The sequence is that of Thermostable direct hemolysin 1 (tdh1) from Vibrio parahaemolyticus serotype O3:K6 (strain RIMD 2210633).